The chain runs to 504 residues: Anaerobic nitric oxide reductase transcription regulator NorR (504 aa).

4-aspartylphosphate is present on D57. The Sigma-54 factor interaction domain occupies 187–416; sequence MIGLSPGMTQ…LEHAIHRAVV (230 aa). Residues 215 to 222 and 278 to 287 each bind ATP; these read GETGTGKE and ADNGTLFLDE. The H-T-H motif DNA-binding region spans 479–498; sequence WAACARMLETDVANLHRLAK.

The protein operates within nitrogen metabolism; nitric oxide reduction. In terms of biological role, required for the expression of anaerobic nitric oxide (NO) reductase, acts as a transcriptional activator for at least the norVW operon. Activation also requires sigma-54. This is Anaerobic nitric oxide reductase transcription regulator NorR from Escherichia coli O157:H7.